Consider the following 388-residue polypeptide: Succinate--CoA ligase [ADP-forming] subunit beta (388 aa).

An ATP-grasp domain is found at K9–E244. ATP-binding positions include K46, G53–G55, E99, A102, and E107. Mg(2+)-binding residues include N199 and D213. Substrate is bound by residues N264 and G321–M323.

Belongs to the succinate/malate CoA ligase beta subunit family. Heterotetramer of two alpha and two beta subunits. The cofactor is Mg(2+).

It catalyses the reaction succinate + ATP + CoA = succinyl-CoA + ADP + phosphate. It carries out the reaction GTP + succinate + CoA = succinyl-CoA + GDP + phosphate. The protein operates within carbohydrate metabolism; tricarboxylic acid cycle; succinate from succinyl-CoA (ligase route): step 1/1. Its function is as follows. Succinyl-CoA synthetase functions in the citric acid cycle (TCA), coupling the hydrolysis of succinyl-CoA to the synthesis of either ATP or GTP and thus represents the only step of substrate-level phosphorylation in the TCA. The beta subunit provides nucleotide specificity of the enzyme and binds the substrate succinate, while the binding sites for coenzyme A and phosphate are found in the alpha subunit. The chain is Succinate--CoA ligase [ADP-forming] subunit beta from Herminiimonas arsenicoxydans.